The chain runs to 232 residues: Large ribosomal subunit protein uL1 (232 aa).

Belongs to the universal ribosomal protein uL1 family. Part of the 50S ribosomal subunit.

Functionally, binds directly to 23S rRNA. The L1 stalk is quite mobile in the ribosome, and is involved in E site tRNA release. Protein L1 is also a translational repressor protein, it controls the translation of the L11 operon by binding to its mRNA. The sequence is that of Large ribosomal subunit protein uL1 from Bartonella quintana (strain Toulouse) (Rochalimaea quintana).